A 132-amino-acid polypeptide reads, in one-letter code: Large ribosomal subunit protein bL12 (132 aa).

It belongs to the bacterial ribosomal protein bL12 family. As to quaternary structure, homodimer. Part of the ribosomal stalk of the 50S ribosomal subunit. Forms a multimeric L10(L12)X complex, where L10 forms an elongated spine to which 2 to 4 L12 dimers bind in a sequential fashion. Binds GTP-bound translation factors.

Its function is as follows. Forms part of the ribosomal stalk which helps the ribosome interact with GTP-bound translation factors. Is thus essential for accurate translation. The chain is Large ribosomal subunit protein bL12 from Prochlorococcus marinus (strain MIT 9211).